The following is a 463-amino-acid chain: Probable glycosyltransferase 3 (463 aa).

Positions 1 to 20 (MAVTGGGRPAARQQAARGKQ) are disordered. Over 1–24 (MAVTGGGRPAARQQAARGKQMQRT) the chain is Cytoplasmic. Positions 9–20 (PAARQQAARGKQ) are enriched in low complexity. The chain crosses the membrane as a helical; Signal-anchor for type II membrane protein span at residues 25-47 (FNNVKITLICGFITLLVLRGTVG). Residues 48–463 (INLLTYGVGG…ALKMDAKIES (416 aa)) are Lumenal-facing. The tract at residues 82–125 (EIRSDTDDDDDDEEEEPLGVDASTTTTTNSTTTTATAARRRSSN) is disordered. Residues 87 to 99 (TDDDDDDEEEEPL) are compositionally biased toward acidic residues. The span at 103–118 (ASTTTTTNSTTTTATA) shows a compositional bias: low complexity. Residues asparagine 110, asparagine 125, and asparagine 442 are each glycosylated (N-linked (GlcNAc...) asparagine).

Belongs to the glycosyltransferase 34 family.

It localises to the golgi apparatus membrane. Its function is as follows. Probable glycosyltransferase that may be involved in the biosynthesis of xyloglucan. This Oryza sativa subsp. indica (Rice) protein is Probable glycosyltransferase 3.